The sequence spans 487 residues: MSSVRESSKDESIVHPPKAPESEPFPDGGARAWMVALGAGGVLFCTFGYVNAFGVYQDYYITHQLSNYSASDIAWIGSVQTFFLFGSGLVGGPLFDRYGAKVIWAPAVLVIFSVMMTSLCTKFYQFFLAQGILGGMSMGLSLAPALSSTAQYFQKKRAAAMGITIAGSSLGGVIFPIALEQMLYSSLGFAWAVRIVGFIILGVMSFAVLGIRARLPPKRQRFLKLEAFKKTHYVATLTAVFFLNVGIFTPFFYLPLYGQSHGMSTGLAFYLIAIQNASSFFGRLVPGVIADKIGPYNMLSTVSIITAIITFCWIRMTTNASIIVFSVLYGFFSGGIIGITPAAIANCAGHPQEIGTYIGMGMAVMSVATLIGPPINGALLNEYGGFLQVQIFSAAVMMFGGVLAFGAKMISFSGEGKGMRKFDHAVAGLAYYVREGGSRMEHIYFGSVAIVAGHLHGPVCAQNKRQMLVTGIGAEMVYVLEYFVEAG.

The segment covering 1 to 21 has biased composition (basic and acidic residues); sequence MSSVRESSKDESIVHPPKAPE. The segment at 1 to 25 is disordered; it reads MSSVRESSKDESIVHPPKAPESEPF. A helical transmembrane segment spans residues 35–55; the sequence is VALGAGGVLFCTFGYVNAFGV. An N-linked (GlcNAc...) asparagine glycan is attached at N67. 8 consecutive transmembrane segments (helical) span residues 75–95, 99–119, 126–146, 159–179, 191–211, 234–254, 262–282, and 293–313; these read WIGSVQTFFLFGSGLVGGPLF, GAKVIWAPAVLVIFSVMMTSL, FFLAQGILGGMSMGLSLAPAL, AAMGITIAGSSLGGVIFPIAL, WAVRIVGFIILGVMSFAVLGI, VATLTAVFFLNVGIFTPFFYL, GMSTGLAFYLIAIQNASSFFG, and IGPYNMLSTVSIITAIITFCW. N319 is a glycosylation site (N-linked (GlcNAc...) asparagine). Helical transmembrane passes span 322–342, 354–374, and 385–405; these read IIVFSVLYGFFSGGIIGITPA, IGTYIGMGMAVMSVATLIGPP, and GFLQVQIFSAAVMMFGGVLAF.

Belongs to the major facilitator superfamily. Monocarboxylate porter (TC 2.A.1.13) family.

It is found in the cell membrane. Functionally, efflux pump that may be involved in the secretion of aspyridones. The chain is Aspyridones efflux protein apdF from Emericella nidulans (strain FGSC A4 / ATCC 38163 / CBS 112.46 / NRRL 194 / M139) (Aspergillus nidulans).